The sequence spans 241 residues: Nickel import ATP-binding protein LarO (241 aa).

An ABC transporter domain is found at 2-240 (IKLVNICYDY…QPARQAQLMT (239 aa)). 34 to 41 (GPNGSGKS) serves as a coordination point for ATP.

This sequence belongs to the ABC transporter superfamily. In terms of assembly, may form an energy-coupling factor (ECF) transporter complex composed of an ATP-binding protein (A component, LarO), a transmembrane protein (T component, LarQ) and a fused possible substrate-capture protein (S component, LarMN) of unknown stoichiometry.

It is found in the cell membrane. In terms of biological role, probable ATP-binding component of the energy-coupling factor (ECF) transporter complex LarMNQO involved in nickel import. LarO is presumably responsible for energy coupling to the transport system. This is Nickel import ATP-binding protein LarO from Lactiplantibacillus plantarum (strain ATCC BAA-793 / NCIMB 8826 / WCFS1) (Lactobacillus plantarum).